The sequence spans 533 residues: Dipeptidase (533 aa).

Residue cysteine 3 is part of the active site.

The protein belongs to the peptidase C69 family.

The enzyme catalyses an L-aminoacyl-L-amino acid + H2O = 2 an L-alpha-amino acid. In terms of biological role, hydrolyzes a wide range of dipeptides. Highest activity against Ala-Gln. The polypeptide is Dipeptidase (Bifidobacterium longum (strain NCC 2705)).